Consider the following 235-residue polypeptide: tRNA1(Val) (adenine(37)-N6)-methyltransferase (235 aa).

The protein belongs to the methyltransferase superfamily. tRNA (adenine-N(6)-)-methyltransferase family.

The protein resides in the cytoplasm. It catalyses the reaction adenosine(37) in tRNA1(Val) + S-adenosyl-L-methionine = N(6)-methyladenosine(37) in tRNA1(Val) + S-adenosyl-L-homocysteine + H(+). Its function is as follows. Specifically methylates the adenine in position 37 of tRNA(1)(Val) (anticodon cmo5UAC). In Glaesserella parasuis serovar 5 (strain SH0165) (Haemophilus parasuis), this protein is tRNA1(Val) (adenine(37)-N6)-methyltransferase.